Here is a 183-residue protein sequence, read N- to C-terminus: GMP synthase [glutamine-hydrolyzing] subunit A (183 aa).

One can recognise a Glutamine amidotransferase type-1 domain in the interval 2-183; that stretch reads KIYVIYNYGQ…YRNFIEICKK (182 aa). Residue C74 is the Nucleophile of the active site. Active-site residues include H161 and E163.

Heterodimer composed of a glutamine amidotransferase subunit (A) and a GMP-binding subunit (B).

The enzyme catalyses XMP + L-glutamine + ATP + H2O = GMP + L-glutamate + AMP + diphosphate + 2 H(+). The protein operates within purine metabolism; GMP biosynthesis; GMP from XMP (L-Gln route): step 1/1. Its function is as follows. Catalyzes the synthesis of GMP from XMP. This Archaeoglobus fulgidus (strain ATCC 49558 / DSM 4304 / JCM 9628 / NBRC 100126 / VC-16) protein is GMP synthase [glutamine-hydrolyzing] subunit A.